We begin with the raw amino-acid sequence, 273 residues long: Glutamate 5-kinase (273 aa).

Lys-15 lines the ATP pocket. Ser-55, Asp-142, and Asn-158 together coordinate substrate. ATP-binding positions include 178–179 (SD) and 220–226 (TGGMLSK).

Belongs to the glutamate 5-kinase family.

The protein resides in the cytoplasm. The enzyme catalyses L-glutamate + ATP = L-glutamyl 5-phosphate + ADP. It functions in the pathway amino-acid biosynthesis; L-proline biosynthesis; L-glutamate 5-semialdehyde from L-glutamate: step 1/2. Its function is as follows. Catalyzes the transfer of a phosphate group to glutamate to form L-glutamate 5-phosphate. The chain is Glutamate 5-kinase from Streptococcus pyogenes serotype M18 (strain MGAS8232).